The chain runs to 352 residues: Protein RecA (352 aa).

65 to 72 lines the ATP pocket; it reads GPESSGKT. Positions 332 to 352 are disordered; it reads EEVEKADVKKDAKKDAAEALK. Residues 333 to 352 are compositionally biased toward basic and acidic residues; it reads EVEKADVKKDAKKDAAEALK.

Belongs to the RecA family.

It is found in the cytoplasm. In terms of biological role, can catalyze the hydrolysis of ATP in the presence of single-stranded DNA, the ATP-dependent uptake of single-stranded DNA by duplex DNA, and the ATP-dependent hybridization of homologous single-stranded DNAs. It interacts with LexA causing its activation and leading to its autocatalytic cleavage. This is Protein RecA from Photobacterium profundum (strain SS9).